Consider the following 382-residue polypeptide: Mannitol-1-phosphate 5-dehydrogenase (382 aa).

An NAD(+)-binding site is contributed by 3–14 (AVHFGAGNIGRG).

This sequence belongs to the mannitol dehydrogenase family.

It carries out the reaction D-mannitol 1-phosphate + NAD(+) = beta-D-fructose 6-phosphate + NADH + H(+). The polypeptide is Mannitol-1-phosphate 5-dehydrogenase (mtlD) (Geobacillus stearothermophilus (Bacillus stearothermophilus)).